A 101-amino-acid polypeptide reads, in one-letter code: Secreted RxLR effector protein 64 (101 aa).

The signal sequence occupies residues 1 to 23 (MMSPPMTTTLMFILNYAIISFHG). The RxLR motif lies at 48–51 (RELR). The chain crosses the membrane as a helical span at residues 67-87 (LQPILPLPLCLPFPLVPASIF).

This sequence belongs to the RxLR effector family.

It localises to the secreted. It is found in the host cytoplasm. The protein resides in the host nucleus. Its subcellular location is the membrane. In terms of biological role, effector that acts as a broad suppressor of cell death to interrupt plant immunity. Inhibits cell death induced by cell death-inducing proteins, including the PAMP elicitor INF1 from P.infestans. The chain is Secreted RxLR effector protein 64 from Plasmopara viticola (Downy mildew of grapevine).